Reading from the N-terminus, the 236-residue chain is MNNIDQQEVEKFEKMAKTWWDPQGDFKPIHLLNPLRLAYINDKTNGLFGKKVLDIGCGGGILSESMAGLGAIVTGIDMAADALLVARQHAESNHLNICYQQITVEDFLKQHCITDTEKFDIITCMEVLEHVPNPHSIIQSCKNLLKEDGLLFISTINRTAKAYMLIIIGAEYVLKMLPKGTHNFEKFIKPSELLRWCSQEDFECKEIVGYHFNPLTKNFWINKDINCNYIAVLQNS.

Positions 36, 56, 77, and 125 each coordinate S-adenosyl-L-methionine.

This sequence belongs to the methyltransferase superfamily. UbiG/COQ3 family.

The enzyme catalyses a 3-demethylubiquinol + S-adenosyl-L-methionine = a ubiquinol + S-adenosyl-L-homocysteine + H(+). The catalysed reaction is a 3-(all-trans-polyprenyl)benzene-1,2-diol + S-adenosyl-L-methionine = a 2-methoxy-6-(all-trans-polyprenyl)phenol + S-adenosyl-L-homocysteine + H(+). The protein operates within cofactor biosynthesis; ubiquinone biosynthesis. In terms of biological role, O-methyltransferase that catalyzes the 2 O-methylation steps in the ubiquinone biosynthetic pathway. The polypeptide is Ubiquinone biosynthesis O-methyltransferase (Glaesserella parasuis serovar 5 (strain SH0165) (Haemophilus parasuis)).